Reading from the N-terminus, the 482-residue chain is uncharacterized protein (482 aa).

The AB hydrolase-1 domain occupies phenylalanine 231–aspartate 459.

This is an uncharacterized protein from Caenorhabditis elegans.